The sequence spans 858 residues: Piwi-like protein 1 (858 aa).

The span at Met-1–Gly-13 shows a compositional bias: basic residues. Residues Met-1–Ala-56 are disordered. Positions Gln-16–Pro-26 are enriched in low complexity. Positions Thr-276–Gly-388 constitute a PAZ domain. A required for binding 2'-O-methylated 3'-end of piRNAs region spans residues Thr-314–Arg-316. Residues Ser-476 to Glu-612 are MID region. A Piwi domain is found at Met-552–His-844. Residues Asp-629, Glu-667, Asp-699, and His-833 contribute to the active site.

It belongs to the argonaute family. Piwi subfamily. Requires Mg(2+) as cofactor. In terms of processing, methylated on arginine residues; required for the interaction with Tudor domain-containing protein and subsequent localization to the meiotic nuage, also named P granule. Expressed exclusively in the adult gonads; expression in the ovary weaker than in the testis (at protein level). During neurogenesis and organogenesis, expression is detected in CNS (midbrain and eye) and fin buds. Starting from 24 hours post-fertilization, expression is found in the genital ridge.

The protein resides in the cytoplasm. Its function is as follows. Plays a central role during gametogenesis by repressing transposable elements and preventing their mobilization, which is essential for the germline integrity. Acts via the piRNA metabolic process, which mediates the repression of transposable elements during meiosis by forming complexes composed of piRNAs and Piwi proteins and governs the methylation and subsequent repression of transposons. Directly binds methylated piRNAs, a class of 24 to 30 nucleotide RNAs that are generated by a Dicer-independent mechanism and are primarily derived from transposons and other repeated sequence elements. Has a strong preference for piRNAs with a uridine nucleotide at their 5'-end (g1U preference, also named 1U-bias) and binds piRNAs in an opposite direction compared to piwil2/zili. Participates in a piRNA amplification loop with piwil2/zili. Not involved in the piRNA amplification loop, also named ping-pong amplification cycle. Acts as an endoribonuclease that cleaves transposon messenger RNAs. This Danio rerio (Zebrafish) protein is Piwi-like protein 1 (piwil1).